Here is a 428-residue protein sequence, read N- to C-terminus: Cytokine-dependent hematopoietic cell linker (428 aa).

Residues 1–22 form a disordered region; it reads MNRQGNRKTTKEGSNDLKFQNF. Phosphotyrosine; by LYN is present on residues Y69 and Y96. 2 disordered regions span residues 135–198 and 244–271; these read DKPI…EVQR and SSSF…PQRC. The interval 159–164 is mediates interaction with PLCG1; essential for BCR signaling; involved in restoration of BCR-induced calcium response and ERK2 and JNK2 activation in BLNK-deficient cells expressing LAT; sequence PLPPPR. Positions 178–180 are mediates interaction with LAT, GRB2, and FGR; involved in translocation to the glycolipid-enriched microdomain and restoration of BCR-induced calcium response in BLNK-deficient DT40 cells expressing LAT; sequence PEP. Low complexity predominate over residues 244 to 253; the sequence is SSSFTTSNHS. The SH2 domain occupies 309–419; that stretch reads WYIGEYSRQA…RKQCHLTQPL (111 aa).

When phosphorylated, interacts with PLCG1, PLCG2, GRB2, VAV and LAT. Interacts with LBR and AGO2. Interacts with FGR. Part of a complex consisting of CLNK, SKAP1 and FYB1. Interacts (via SH2 domain) with FYB1; this interaction allows SKAP1 and FYB1 to promote tyrosine phosphorylation of CLNK by LYN. Interacts (via SH2 domain) with MAP4K1. Tyrosine-phosphorylated upon BCR cross-linking. Tyrosine phosphorylation at both Tyr-69 and Tyr-96 are required for BCR-induced calcium response and are essential to restore PLCG2-mediated signaling in BLNK-deficient DT40 cells, but this phosphorylation is dispensable in cells expressing LAT. Interacts with the SH2 domain of PLCG1 via phosphorylated Tyr-96. Tyrosine phosphorylation is increased when complexed with SKAP1 and FYB1.

Its subcellular location is the cytoplasm. Its function is as follows. An adapter protein which plays a role in the regulation of immunoreceptor signaling, including PLC-gamma-mediated B-cell antigen receptor (BCR) signaling and FC-epsilon R1-mediated mast cell degranulation. Together with FGR, it acts as a negative regulator of natural killer cell-activating receptors and inhibits interferon-gamma production. Acts as a positive regulator of both T-cell receptor and natural killer T (NKT) cell receptor signaling in CD4-positive NKT cells. Together with MAP4K1, it enhances CD3-triggered activation of T-cells and subsequent IL2 production. May be involved in tumor necrosis factor induced cell death by promoting reactive oxidative species generation, and MLKL oligomerization, ultimately leading to necrosis. Involved in phosphorylation of LAT. May be involved in high affinity immunoglobulin epsilon receptor signaling in mast cells. The protein is Cytokine-dependent hematopoietic cell linker (CLNK) of Homo sapiens (Human).